We begin with the raw amino-acid sequence, 305 residues long: Ribosomal RNA large subunit methyltransferase F (305 aa).

It belongs to the methyltransferase superfamily. METTL16/RlmF family.

The protein resides in the cytoplasm. The enzyme catalyses adenosine(1618) in 23S rRNA + S-adenosyl-L-methionine = N(6)-methyladenosine(1618) in 23S rRNA + S-adenosyl-L-homocysteine + H(+). Specifically methylates the adenine in position 1618 of 23S rRNA. The protein is Ribosomal RNA large subunit methyltransferase F of Bacteroides fragilis (strain YCH46).